A 258-amino-acid chain; its full sequence is Small ribosomal subunit protein mS23 (258 aa).

The segment covering lysine 230–alanine 239 has biased composition (polar residues). The interval lysine 230–leucine 258 is disordered. Over residues alanine 241 to leucine 258 the composition is skewed to acidic residues.

Belongs to the mitochondrion-specific ribosomal protein mS23 family. In terms of assembly, component of the mitochondrial small ribosomal subunit.

Its subcellular location is the mitochondrion. The chain is Small ribosomal subunit protein mS23 (RSM25) from Eremothecium gossypii (strain ATCC 10895 / CBS 109.51 / FGSC 9923 / NRRL Y-1056) (Yeast).